A 209-amino-acid chain; its full sequence is Thiamine-phosphate synthase (209 aa).

4-amino-2-methyl-5-(diphosphooxymethyl)pyrimidine contacts are provided by residues 32 to 36 (QLRMK) and aspartate 64. Residues aspartate 65 and aspartate 84 each coordinate Mg(2+). Threonine 103 contacts 4-amino-2-methyl-5-(diphosphooxymethyl)pyrimidine. 129–131 (TTT) is a binding site for 2-[(2R,5Z)-2-carboxy-4-methylthiazol-5(2H)-ylidene]ethyl phosphate. Lysine 132 serves as a coordination point for 4-amino-2-methyl-5-(diphosphooxymethyl)pyrimidine. Glycine 165 contributes to the 2-[(2R,5Z)-2-carboxy-4-methylthiazol-5(2H)-ylidene]ethyl phosphate binding site.

This sequence belongs to the thiamine-phosphate synthase family. Mg(2+) is required as a cofactor.

The enzyme catalyses 2-[(2R,5Z)-2-carboxy-4-methylthiazol-5(2H)-ylidene]ethyl phosphate + 4-amino-2-methyl-5-(diphosphooxymethyl)pyrimidine + 2 H(+) = thiamine phosphate + CO2 + diphosphate. It catalyses the reaction 2-(2-carboxy-4-methylthiazol-5-yl)ethyl phosphate + 4-amino-2-methyl-5-(diphosphooxymethyl)pyrimidine + 2 H(+) = thiamine phosphate + CO2 + diphosphate. It carries out the reaction 4-methyl-5-(2-phosphooxyethyl)-thiazole + 4-amino-2-methyl-5-(diphosphooxymethyl)pyrimidine + H(+) = thiamine phosphate + diphosphate. The protein operates within cofactor biosynthesis; thiamine diphosphate biosynthesis; thiamine phosphate from 4-amino-2-methyl-5-diphosphomethylpyrimidine and 4-methyl-5-(2-phosphoethyl)-thiazole: step 1/1. Its function is as follows. Condenses 4-methyl-5-(beta-hydroxyethyl)thiazole monophosphate (THZ-P) and 2-methyl-4-amino-5-hydroxymethyl pyrimidine pyrophosphate (HMP-PP) to form thiamine monophosphate (TMP). The sequence is that of Thiamine-phosphate synthase from Bacteroides thetaiotaomicron (strain ATCC 29148 / DSM 2079 / JCM 5827 / CCUG 10774 / NCTC 10582 / VPI-5482 / E50).